We begin with the raw amino-acid sequence, 215 residues long: Large ribosomal subunit protein uL1 (215 aa).

The protein belongs to the universal ribosomal protein uL1 family. In terms of assembly, part of the 50S ribosomal subunit.

In terms of biological role, binds directly to 23S rRNA. Probably involved in E site tRNA release. Functionally, protein L1 is also a translational repressor protein, it controls the translation of its operon by binding to its mRNA. This chain is Large ribosomal subunit protein uL1, found in Methanospirillum hungatei JF-1 (strain ATCC 27890 / DSM 864 / NBRC 100397 / JF-1).